We begin with the raw amino-acid sequence, 485 residues long: Glutamyl-tRNA(Gln) amidotransferase subunit A (485 aa).

Catalysis depends on charge relay system residues Lys-79 and Ser-154. The active-site Acyl-ester intermediate is the Ser-178.

Belongs to the amidase family. GatA subfamily. As to quaternary structure, heterotrimer of A, B and C subunits.

The enzyme catalyses L-glutamyl-tRNA(Gln) + L-glutamine + ATP + H2O = L-glutaminyl-tRNA(Gln) + L-glutamate + ADP + phosphate + H(+). Functionally, allows the formation of correctly charged Gln-tRNA(Gln) through the transamidation of misacylated Glu-tRNA(Gln) in organisms which lack glutaminyl-tRNA synthetase. The reaction takes place in the presence of glutamine and ATP through an activated gamma-phospho-Glu-tRNA(Gln). The chain is Glutamyl-tRNA(Gln) amidotransferase subunit A from Staphylococcus epidermidis (strain ATCC 35984 / DSM 28319 / BCRC 17069 / CCUG 31568 / BM 3577 / RP62A).